The chain runs to 245 residues: 2,3-bisphosphoglycerate-dependent phosphoglycerate mutase (245 aa).

Substrate-binding positions include Arg-9 to Asn-16, Thr-22 to Gly-23, Arg-61, Glu-88 to Tyr-91, Lys-99, Arg-115 to Arg-116, and Gly-181 to Asn-182. The Tele-phosphohistidine intermediate role is filled by His-10. Glu-88 acts as the Proton donor/acceptor in catalysis.

This sequence belongs to the phosphoglycerate mutase family. BPG-dependent PGAM subfamily.

The catalysed reaction is (2R)-2-phosphoglycerate = (2R)-3-phosphoglycerate. The protein operates within carbohydrate degradation; glycolysis; pyruvate from D-glyceraldehyde 3-phosphate: step 3/5. Functionally, catalyzes the interconversion of 2-phosphoglycerate and 3-phosphoglycerate. The polypeptide is 2,3-bisphosphoglycerate-dependent phosphoglycerate mutase (Nocardia farcinica (strain IFM 10152)).